A 397-amino-acid polypeptide reads, in one-letter code: MKREECLLVLAGLLARVGFFSYGIYQDAHFAVKYTDIDYHVFHDAARYVAQGNSPYLRDTYRYTPLLSWMLVPNHWLQWVHFGKFIFVLFDLLAGVMVMNLLGKCGRRRKLILASLWLLNPVVITVSTRGNAESVMAFLIMWFLVHLRNRQFALSGFVYGVAIHFKIYPIIYALPISIYIRSSEGSRWFLRLLTMGIATLATLVGCGIGMYYIYGWEFLEHAYIYHFTRTDHRHNFSLWNMLLYLDSSGVVPTTINWAEFAFLPQLFICAAVTYVLWEAPTFQNMQCVLFLQTFAFVTYNKVCTSQYFIWYLLFLPSFLLDTTLSGAKGIFLIFLWVGTQAWWLYNGYLLEFEGKNMFYPRLFSACVTFFLANVYLLAQFILDCRRRNYQTNIKKTN.

A run of 9 helical transmembrane segments spans residues 5-25 (ECLL…YGIY), 79-99 (WVHF…VMVM), 111-128 (LILA…TVST), 156-176 (GFVY…ALPI), 193-213 (LTMG…MYYI), 257-277 (WAEF…YVLW), 307-327 (YFIW…LSGA), 330-350 (IFLI…GYLL), and 362-382 (LFSA…QFIL).

Belongs to the PIGM family.

Its subcellular location is the endoplasmic reticulum membrane. It participates in glycolipid biosynthesis; glycosylphosphatidylinositol-anchor biosynthesis. Functionally, mannosyltransferase involved in glycosylphosphatidylinositol-anchor biosynthesis. Transfers the first alpha-1,4-mannose to GlcN-acyl-PI during GPI precursor assembly. Required for cell wall integrity. The sequence is that of GPI mannosyltransferase 1 (GPI14) from Eremothecium gossypii (strain ATCC 10895 / CBS 109.51 / FGSC 9923 / NRRL Y-1056) (Yeast).